Here is a 282-residue protein sequence, read N- to C-terminus: Glutamyl endopeptidase (282 aa).

The first 27 residues, 1–27 (MKKRFLSICTMTIAALATTTMVNTSYA), serve as a signal peptide directing secretion. A propeptide spanning residues 28-66 (KTDTESHNHSSLGTENKNVLDINSSSHNIKPSQNKSYPS) is cleaved from the precursor. Residues histidine 117, aspartate 159, and serine 235 each act as charge relay system in the active site.

This sequence belongs to the peptidase S1B family. In terms of assembly, monomer.

It localises to the secreted. It catalyses the reaction Preferential cleavage: Glu-|-Xaa, Asp-|-Xaa.. Its activity is regulated as follows. Inhibited by diisopropyl fluorophosphate. Functionally, exhibits a significant hydrolytic activity for the carbonyl side of glutamic acid. Shows activity toward human fibronectin and type 1 collagen. The polypeptide is Glutamyl endopeptidase (gseA) (Staphylococcus epidermidis).